A 357-amino-acid polypeptide reads, in one-letter code: Heat-inducible transcription repressor HrcA (357 aa).

It belongs to the HrcA family.

Functionally, negative regulator of class I heat shock genes (grpE-dnaK-dnaJ and groELS operons). Prevents heat-shock induction of these operons. This chain is Heat-inducible transcription repressor HrcA, found in Chlorobium limicola (strain DSM 245 / NBRC 103803 / 6330).